The sequence spans 139 residues: Small ribosomal subunit protein uS12 (139 aa).

D102 is subject to 3-methylthioaspartic acid.

This sequence belongs to the universal ribosomal protein uS12 family. Part of the 30S ribosomal subunit. Contacts proteins S8 and S17. May interact with IF1 in the 30S initiation complex.

In terms of biological role, with S4 and S5 plays an important role in translational accuracy. Functionally, interacts with and stabilizes bases of the 16S rRNA that are involved in tRNA selection in the A site and with the mRNA backbone. Located at the interface of the 30S and 50S subunits, it traverses the body of the 30S subunit contacting proteins on the other side and probably holding the rRNA structure together. The combined cluster of proteins S8, S12 and S17 appears to hold together the shoulder and platform of the 30S subunit. The polypeptide is Small ribosomal subunit protein uS12 (Mycoplasma capricolum subsp. capricolum (strain California kid / ATCC 27343 / NCTC 10154)).